A 443-amino-acid polypeptide reads, in one-letter code: Tol-Pal system protein TolB (443 aa).

An N-terminal signal peptide occupies residues 1–18 (MRNIVYFILTLFSLTSYA).

It belongs to the TolB family. In terms of assembly, the Tol-Pal system is composed of five core proteins: the inner membrane proteins TolA, TolQ and TolR, the periplasmic protein TolB and the outer membrane protein Pal. They form a network linking the inner and outer membranes and the peptidoglycan layer.

The protein localises to the periplasm. Part of the Tol-Pal system, which plays a role in outer membrane invagination during cell division and is important for maintaining outer membrane integrity. This chain is Tol-Pal system protein TolB, found in Rickettsia prowazekii (strain Madrid E).